Here is a 202-residue protein sequence, read N- to C-terminus: V-type proton ATPase subunit E (202 aa).

Belongs to the V-ATPase E subunit family.

Produces ATP from ADP in the presence of a proton gradient across the membrane. This Halothermothrix orenii (strain H 168 / OCM 544 / DSM 9562) protein is V-type proton ATPase subunit E.